Reading from the N-terminus, the 128-residue chain is MRSSRCARLLLLLLLPPLLLTPPAGDAAVITGACDRDPQCGGGMCCAVSLWVKSIRICTPMGKVGDSCHPMTRKNHFGNGRQERRKRKRRRKKKVPFLGRRMHHTCPCLPGLACSRTSFNRYTCLAQK.

The N-terminal stretch at 1–27 (MRSSRCARLLLLLLLPPLLLTPPAGDA) is a signal peptide. 5 disulfides stabilise this stretch: Cys-34/Cys-46, Cys-40/Cys-58, Cys-45/Cys-106, Cys-68/Cys-114, and Cys-108/Cys-124. The tract at residues 71–95 (MTRKNHFGNGRQERRKRKRRRKKKV) is disordered. A compositionally biased stretch (basic residues) spans 83 to 95 (ERRKRKRRRKKKV).

The protein belongs to the AVIT (prokineticin) family.

Its subcellular location is the secreted. May function as an output molecule from the suprachiasmatic nucleus (SCN) that transmits behavioral circadian rhythm. May also function locally within the SCN to synchronize output. Potently contracts gastrointestinal (GI) smooth muscle. The chain is Prokineticin-2 (PROK2) from Bos taurus (Bovine).